Here is a 317-residue protein sequence, read N- to C-terminus: DNA-directed RNA polymerase subunit alpha 2 (317 aa).

An alpha N-terminal domain (alpha-NTD) region spans residues 1 to 227 (MALENLLHPT…NQLRNIVDIE (227 aa)). Positions 241–317 (INPILLKHVE…TLIENWPQDL (77 aa)) are alpha C-terminal domain (alpha-CTD).

Belongs to the RNA polymerase alpha chain family. In terms of assembly, homodimer. The RNAP catalytic core consists of 2 alpha, 1 beta, 1 beta' and 1 omega subunit. When a sigma factor is associated with the core the holoenzyme is formed, which can initiate transcription.

The catalysed reaction is RNA(n) + a ribonucleoside 5'-triphosphate = RNA(n+1) + diphosphate. DNA-dependent RNA polymerase catalyzes the transcription of DNA into RNA using the four ribonucleoside triphosphates as substrates. The polypeptide is DNA-directed RNA polymerase subunit alpha 2 (Francisella tularensis subsp. holarctica (strain FTNF002-00 / FTA)).